The following is a 350-amino-acid chain: MRKLLKPVKDVGIVGYGAYVPKYRIKAEEIGRVWGVSSFPIEEKAVPGLDEDALTIGIEAARNALKRARIDPKLIRAVWFGSESKPYAVKPTGTVIAEAIGATPDVSTADFEFACKAGTEALQTAIGFVGSGMADYAMAIGADTAQGRPGDHLEFTAGAGGAAFIVGEKSSETVAYFEGSYSYVTDTPDFWRRQHEHYPRHGNRFTGEPAYFHHIINAAKTLMEELGLTVNDFDYAVFHQPNVKFPLTVAKILGIPKEKVLPGLLTGIIGNTYSGATMVGVSAVLDIAKPGDRILWVSFGSGAGSDAFSIVVQDAIEEKRDLAPKTMDYVNRKKYIDYALYAKARRKYIM.

The Proton donor/acceptor role is filled by glutamate 83. Catalysis depends on cysteine 115, which acts as the Acyl-thioester intermediate. (3S)-3-hydroxy-3-methylglutaryl-CoA contacts are provided by cysteine 115 and threonine 156. Arginine 204 serves as a coordination point for CoA. (3S)-3-hydroxy-3-methylglutaryl-CoA is bound by residues threonine 206 and histidine 239. The Proton donor/acceptor role is filled by histidine 239. Position 244 (lysine 244) interacts with CoA. The (3S)-3-hydroxy-3-methylglutaryl-CoA site is built by asparagine 271 and serine 301.

Belongs to the thiolase-like superfamily. Archaeal HMG-CoA synthase family. Interacts with acetoacetyl-CoA thiolase that catalyzes the precedent step in the pathway and with a DUF35 protein. The acetoacetyl-CoA thiolase/HMG-CoA synthase complex channels the intermediate via a fused CoA-binding site, which allows for efficient coupling of the endergonic thiolase reaction with the exergonic HMGCS reaction.

The enzyme catalyses acetoacetyl-CoA + acetyl-CoA + H2O = (3S)-3-hydroxy-3-methylglutaryl-CoA + CoA + H(+). Its pathway is metabolic intermediate biosynthesis; (R)-mevalonate biosynthesis; (R)-mevalonate from acetyl-CoA: step 2/3. Catalyzes the condensation of acetyl-CoA with acetoacetyl-CoA to form 3-hydroxy-3-methylglutaryl-CoA (HMG-CoA). Functions in the mevalonate (MVA) pathway leading to isopentenyl diphosphate (IPP), a key precursor for the biosynthesis of isoprenoid compounds that are building blocks of archaeal membrane lipids. This Thermococcus onnurineus (strain NA1) protein is Hydroxymethylglutaryl-CoA synthase.